Here is a 782-residue protein sequence, read N- to C-terminus: E3 UFM1-protein ligase 1 homolog (782 aa).

Residues Val405 to Lys478 are disordered.

This sequence belongs to the UFL1 family.

In terms of biological role, E3 UFM1-protein ligase that mediates ufmylation of target proteins. The sequence is that of E3 UFM1-protein ligase 1 homolog from Drosophila simulans (Fruit fly).